The following is a 187-amino-acid chain: Large ribosomal subunit protein uL13 (187 aa).

The protein belongs to the universal ribosomal protein uL13 family. As to quaternary structure, part of the 50S ribosomal subunit.

Functionally, this protein is one of the early assembly proteins of the 50S ribosomal subunit, although it is not seen to bind rRNA by itself. It is important during the early stages of 50S assembly. In Pyrobaculum aerophilum (strain ATCC 51768 / DSM 7523 / JCM 9630 / CIP 104966 / NBRC 100827 / IM2), this protein is Large ribosomal subunit protein uL13.